The primary structure comprises 473 residues: Allene oxide synthase CYP74A2 (473 aa).

Lysine 88, histidine 119, and lysine 123 together coordinate heme b. Serine 199 and lysine 282 together coordinate (13S)-hydroperoxy-(9Z,11E)-octadecadienoate. 2 residues coordinate heme b: lysine 424 and cysteine 426.

This sequence belongs to the cytochrome P450 family. The cofactor is heme b.

The catalysed reaction is (13S)-hydroperoxy-(9Z,11E,15Z)-octadecatrienoate = (9Z,13S,15Z)-12,13-epoxyoctadeca-9,11,15-trienoate + H2O. It catalyses the reaction (13S)-hydroperoxy-(9Z,11E)-octadecadienoate = (9Z,13S)-12,13-epoxyoctadeca-9,11-dienoate + H2O. The protein operates within lipid metabolism; oxylipin biosynthesis. Its function is as follows. Cytochrome P450 enzyme involved in the biosynthesis of oxylipin jasmonates, important phytohormones acting as growth regulators and signaling molecules for plant defense. Functions as an allene oxide synthase that converts hydroperoxy fatty acids to unstable allene epoxides. Catalyzes the dehydration of 13-HPOTE ((13S)-hydroperoxy-(9Z,11E,15Z)-octadecatrienoate). Also catalyzes the dehydration of 13-HPODE ((13S)-hydroperoxy-(9Z,11E)-octadecadienoate). In Parthenium argentatum (Guayule rubber plant), this protein is Allene oxide synthase CYP74A2.